A 146-amino-acid polypeptide reads, in one-letter code: Small RNA-binding protein 11, chloroplastic (146 aa).

The N-terminal 31 residues, 1 to 31 (MAALARIGGRHLKSVCLINSSASCFFTQRRG), are a transit peptide targeting the chloroplast. The RRM domain maps to 34–112 (SKLFIGGLSF…RTIFVDYAKA (79 aa)). Ser42 bears the Phosphoserine mark.

Expressed in rosette leaves, cauline leaves, stems and flowers.

It is found in the plastid. The protein resides in the chloroplast. Probable RNA-binding protein that may be involved in salt and oxidative stress tolerance. This is Small RNA-binding protein 11, chloroplastic from Arabidopsis thaliana (Mouse-ear cress).